The following is an 88-amino-acid chain: Mitochondrial import inner membrane translocase subunit TIM9 (88 aa).

Positions 35–59 (CFDDCVNDFTSNNLTTKETGCITKC) match the Twin CX3C motif motif. 2 cysteine pairs are disulfide-bonded: cysteine 35–cysteine 59 and cysteine 39–cysteine 55.

This sequence belongs to the small Tim family. As to quaternary structure, heterohexamer; composed of 3 copies of TIM9 and 3 copies of TIM10, named soluble 70 kDa complex. Associates with the TIM22 complex, whose core is composed of TIM22 and TIM54. Interacts with the transmembrane regions of multi-pass transmembrane proteins in transit.

The protein resides in the mitochondrion inner membrane. Mitochondrial intermembrane chaperone that participates in the import and insertion of multi-pass transmembrane proteins into the mitochondrial inner membrane. Also required for the transfer of beta-barrel precursors from the TOM complex to the sorting and assembly machinery (SAM complex) of the outer membrane. Acts as a chaperone-like protein that protects the hydrophobic precursors from aggregation and guide them through the mitochondrial intermembrane space. In Debaryomyces hansenii (strain ATCC 36239 / CBS 767 / BCRC 21394 / JCM 1990 / NBRC 0083 / IGC 2968) (Yeast), this protein is Mitochondrial import inner membrane translocase subunit TIM9 (TIM9).